We begin with the raw amino-acid sequence, 156 residues long: Ribosomal RNA large subunit methyltransferase H (156 aa).

L72 and G104 together coordinate S-adenosyl-L-methionine.

The protein belongs to the RNA methyltransferase RlmH family. Homodimer.

It is found in the cytoplasm. It catalyses the reaction pseudouridine(1915) in 23S rRNA + S-adenosyl-L-methionine = N(3)-methylpseudouridine(1915) in 23S rRNA + S-adenosyl-L-homocysteine + H(+). Functionally, specifically methylates the pseudouridine at position 1915 (m3Psi1915) in 23S rRNA. The polypeptide is Ribosomal RNA large subunit methyltransferase H (Maricaulis maris (strain MCS10) (Caulobacter maris)).